The primary structure comprises 973 residues: MDPFRPSFRGQSPIHPSQCQAVRMPGCWPQASKPLDPALGRGAPAGRGHVFGKPEEPSTQRGPAQRESVGLVSMFRGLGIETVSKTPLKREMLPSGRGILGRGLSANLVRKDREELSPTFWDPKVLAAGDSKMAETSVGWSRTLGRGSSDASLLPLGRAAGGISREVDKPPCTFSTPSRGPPQLSSPPALPQSPLHSPDRPLVLTVEHKEKELIVKQGSKGTPQSLGLNLVKIQCHNEAVYQYHVTFSPNVECKSMRFGMLKDHQAVTGNVTAFDGSILYLPVKLQQVLELKSQRKTDSAEISIKIQMTKILEPCSDLCIPFYNVVFRRVMKLLDMKLVGRNFYDPTSAMVLQQHRLQIWPGYAASIRRTDGGLFLLADVSHKVIRNDCVLDVMHAIYQQNKEHFQDECTKLLVGNIVITRYNNRTYRIDDVDWNKTPKDSFTMSDGKEITFLEYYSKNYGITVKEEDQPLLIHRPSERQDNHGMLLKGEILLLPELSFMTGIPEKMKKDFRAMKDLAQQINLSPKQHHSALECLLQRIAKNEAATNELMRWGLRLQKDVHKIEGRVLPMERINLKNTSFITSQELNWVKEVTRDPSILTIPMHFWALFYPKRAMDQARELVNMLEKIAGPIGMRMSPPAWVELKDDRIETYVRTIQSTLGAEGKIQMVVCIIMGPRDDLYGAIKKLCCVQSPVPSQVVNVRTIGQPTRLRSVAQKILLQINCKLGGELWGVDIPLKQLMVIGMDVYHDPSRGMRSVVGFVASINLTLTKWYSRVVFQMPHQEIVDSLKLCLVGSLKKFYEVNHCLPEKIVVYRDGVSDGQLKTVANYEIPQLQKCFEAFENYQPKMVVFVVQKKISTNLYLAAPQNFVTPTPGTVVDHTITSCEWVDFYLLAHHVRQGCGIPTHYVCVLNTANLSPDHMQRLTFKLCHMYWNWPGTIRVPAPCKYAHKLAFLSGHILHHEPAIQLCENLFFL.

The segment at 28–65 is disordered; it reads WPQASKPLDPALGRGAPAGRGHVFGKPEEPSTQRGPAQ. A compositionally biased stretch (low complexity) spans 34 to 48; that stretch reads PLDPALGRGAPAGRG. R47 carries the symmetric dimethylarginine modification. R76 and R97 each carry omega-N-methylarginine; by PRMT5; alternate. At R76 the chain carries Symmetric dimethylarginine; by PRMT5; alternate. R97 is modified (symmetric dimethylarginine; alternate). R102 carries the post-translational modification Symmetric dimethylarginine; by PRMT5; alternate. Omega-N-methylarginine; alternate is present on R102. R146 and R158 each carry symmetric dimethylarginine. The segment at 162–199 is disordered; the sequence is GISREVDKPPCTFSTPSRGPPQLSSPPALPQSPLHSPD. Position 165 is a symmetric dimethylarginine; by PRMT5 (R165). In terms of domain architecture, PAZ spans 389–502; that stretch reads CVLDVMHAIY…LLPELSFMTG (114 aa). R551 carries the symmetric dimethylarginine; by PRMT5 modification. The region spanning 668-959 is the Piwi domain; the sequence is MVVCIIMGPR…LAFLSGHILH (292 aa). Catalysis depends on residues D745, E783, D815, and H948.

Belongs to the argonaute family. Piwi subfamily. Interacts with DDX4, MAEL, EIF3A, EIF4E, EIF4G, PRMT5 and WDR77. Associates with EIF4E- and EIF4G-containing m7G cap-binding complexes. Interacts (when methylated on arginine residues) with TDRD1 and TDRKH/TDRD2. Interacts with TDRD12. Component of the PET complex, at least composed of EXD1, PIWIL2, TDRD12 and piRNAs. Interacts with MOV10L1. Interacts with GPAT2. Interacts with TEX19. Interacts with GSK3B. Interacts (via PIWI domain) with BMAL1 and CLOCK. Interacts with TEX15. It depends on Mg(2+) as a cofactor. Arginine methylation by PRMT5 is required for the interaction with Tudor domain-containing protein TDRD1 and subsequent localization to the meiotic nuage, also named P granule. As to expression, expressed in adult testis and in most tumors.

The protein resides in the cytoplasm. Functionally, endoribonuclease that plays a central role during spermatogenesis by repressing transposable elements and preventing their mobilization, which is essential for the germline integrity. Plays an essential role in meiotic differentiation of spermatocytes, germ cell differentiation and in self-renewal of spermatogonial stem cells. Acts via the piRNA metabolic process, which mediates the repression of transposable elements during meiosis by forming complexes composed of piRNAs and Piwi proteins and govern the methylation and subsequent repression of transposons. During piRNA biosynthesis, plays a key role in the piRNA amplification loop, also named ping-pong amplification cycle, by acting as a 'slicer-competent' piRNA endoribonuclease that cleaves primary piRNAs, which are then loaded onto 'slicer-incompetent' PIWIL4. PIWIL2 slicing produces a pre-miRNA intermediate, which is then processed in mature piRNAs, and as well as a 16 nucleotide by-product that is degraded. Required for PIWIL4/MIWI2 nuclear localization and association with secondary piRNAs antisense. Besides their function in transposable elements repression, piRNAs are probably involved in other processes during meiosis such as translation regulation. Indirectly modulates expression of genes such as PDGFRB, SLC2A1, ITGA6, GJA7, THY1, CD9 and STRA8. When overexpressed, acts as an oncogene by inhibition of apoptosis and promotion of proliferation in tumors. Represses circadian rhythms by promoting the stability and activity of core clock components BMAL1 and CLOCK by inhibiting GSK3B-mediated phosphorylation and ubiquitination-dependent degradation of these proteins. The sequence is that of Piwi-like protein 2 (PIWIL2) from Homo sapiens (Human).